We begin with the raw amino-acid sequence, 121 residues long: Ribulose bisphosphate carboxylase small subunit (121 aa).

It belongs to the RuBisCO small chain family. As to quaternary structure, heterohexadecamer of 8 large and 8 small subunits.

In terms of biological role, ruBisCO catalyzes two reactions: the carboxylation of D-ribulose 1,5-bisphosphate, the primary event in carbon dioxide fixation, as well as the oxidative fragmentation of the pentose substrate. Both reactions occur simultaneously and in competition at the same active site. Although the small subunit is not catalytic it is essential for maximal activity. The polypeptide is Ribulose bisphosphate carboxylase small subunit (Alvinoconcha hessleri symbiotic bacterium).